A 390-amino-acid chain; its full sequence is LL-diaminopimelate aminotransferase 2 (390 aa).

Residues Y13 and G38 each coordinate substrate. Pyridoxal 5'-phosphate is bound by residues Y67, 102–103 (SK), Y127, N177, Y208, and 236–238 (SLS). Positions 103, 127, and 177 each coordinate substrate. K239 carries the post-translational modification N6-(pyridoxal phosphate)lysine. R247 contacts pyridoxal 5'-phosphate. A substrate-binding site is contributed by R365.

Belongs to the class-I pyridoxal-phosphate-dependent aminotransferase family. LL-diaminopimelate aminotransferase subfamily. Homodimer. Pyridoxal 5'-phosphate serves as cofactor.

The enzyme catalyses (2S,6S)-2,6-diaminopimelate + 2-oxoglutarate = (S)-2,3,4,5-tetrahydrodipicolinate + L-glutamate + H2O + H(+). Its pathway is amino-acid biosynthesis; L-lysine biosynthesis via DAP pathway; LL-2,6-diaminopimelate from (S)-tetrahydrodipicolinate (aminotransferase route): step 1/1. Involved in the synthesis of meso-diaminopimelate (m-DAP or DL-DAP), required for both lysine and peptidoglycan biosynthesis. Catalyzes the direct conversion of tetrahydrodipicolinate to LL-diaminopimelate. The protein is LL-diaminopimelate aminotransferase 2 of Trichormus variabilis (strain ATCC 29413 / PCC 7937) (Anabaena variabilis).